The chain runs to 57 residues: Large ribosomal subunit protein eL20 (57 aa).

The protein belongs to the eukaryotic ribosomal protein eL20 family. Part of the 50S ribosomal subunit. Binds 23S rRNA.

This chain is Large ribosomal subunit protein eL20, found in Natronomonas pharaonis (strain ATCC 35678 / DSM 2160 / CIP 103997 / JCM 8858 / NBRC 14720 / NCIMB 2260 / Gabara) (Halobacterium pharaonis).